The sequence spans 222 residues: Potassium-transporting ATPase KdpC subunit (222 aa).

The helical transmembrane segment at 13–35 (WAGLRSLLVLTVVTGVLYPLAVT) threads the bilayer. The tract at residues 136–162 (TADHKVKPSDVPADAVTSSGSGLDPDI) is disordered.

Belongs to the KdpC family. The system is composed of three essential subunits: KdpA, KdpB and KdpC.

The protein resides in the cell membrane. In terms of biological role, part of the high-affinity ATP-driven potassium transport (or Kdp) system, which catalyzes the hydrolysis of ATP coupled with the electrogenic transport of potassium into the cytoplasm. This subunit acts as a catalytic chaperone that increases the ATP-binding affinity of the ATP-hydrolyzing subunit KdpB by the formation of a transient KdpB/KdpC/ATP ternary complex. The protein is Potassium-transporting ATPase KdpC subunit of Streptomyces avermitilis (strain ATCC 31267 / DSM 46492 / JCM 5070 / NBRC 14893 / NCIMB 12804 / NRRL 8165 / MA-4680).